The primary structure comprises 99 residues: DNA-directed RNA polymerase subunit Rpo11 (99 aa).

Belongs to the archaeal Rpo11/eukaryotic RPB11/RPC19 RNA polymerase subunit family. Part of the RNA polymerase complex.

The protein resides in the cytoplasm. It catalyses the reaction RNA(n) + a ribonucleoside 5'-triphosphate = RNA(n+1) + diphosphate. In terms of biological role, DNA-dependent RNA polymerase (RNAP) catalyzes the transcription of DNA into RNA using the four ribonucleoside triphosphates as substrates. This is DNA-directed RNA polymerase subunit Rpo11 from Aeropyrum pernix (strain ATCC 700893 / DSM 11879 / JCM 9820 / NBRC 100138 / K1).